A 170-amino-acid polypeptide reads, in one-letter code: uncharacterized protein (170 aa).

Residues 1–28 (MTGGVMSQKFVVGAGLLVCSVCSLSAMA) form the signal peptide.

Belongs to the fimbrial protein family.

Its function is as follows. Part of the yfcOPQRSUV fimbrial operon. Could contribute to adhesion to various surfaces in specific environmental niches. Increases adhesion to eukaryotic T24 bladder epithelial cells in the absence of fim genes. This is an uncharacterized protein from Escherichia coli (strain K12).